The chain runs to 225 residues: Cbp/p300-interacting transactivator 2 (225 aa).

The protein belongs to the CITED family.

Its subcellular location is the nucleus. Functionally, transcriptional coactivator or corepressor of the p300/CBP-mediated transcription complex. May be involved in sex determination, early gonad development, left-right patterning during embryogenesis and differentiation of the adrenal cortex. This chain is Cbp/p300-interacting transactivator 2 (cited2), found in Xenopus tropicalis (Western clawed frog).